The sequence spans 205 residues: Recombination protein RecR (205 aa).

The C4-type zinc-finger motif lies at 64 to 79; sequence CRRCFNITVDELCPIC. The Toprim domain maps to 87–182; sequence TKICVVEEPL…RVTRPARGLP (96 aa).

This sequence belongs to the RecR family.

Functionally, may play a role in DNA repair. It seems to be involved in an RecBC-independent recombinational process of DNA repair. It may act with RecF and RecO. The chain is Recombination protein RecR from Chloroflexus aggregans (strain MD-66 / DSM 9485).